Consider the following 215-residue polypeptide: Large ribosomal subunit protein uL4 (215 aa).

Residues 46–72 are disordered; it reads TAKSKNRAEVSGGGRKPWAQKGGGRAR. Over residues 56–71 the composition is skewed to gly residues; that stretch reads SGGGRKPWAQKGGGRA.

It belongs to the universal ribosomal protein uL4 family. In terms of assembly, part of the 50S ribosomal subunit.

Functionally, one of the primary rRNA binding proteins, this protein initially binds near the 5'-end of the 23S rRNA. It is important during the early stages of 50S assembly. It makes multiple contacts with different domains of the 23S rRNA in the assembled 50S subunit and ribosome. In terms of biological role, forms part of the polypeptide exit tunnel. The sequence is that of Large ribosomal subunit protein uL4 from Helicobacter pylori (strain G27).